We begin with the raw amino-acid sequence, 330 residues long: Protein-lysine N-methyltransferase EEF2KMT (330 aa).

The residue at position 1 (methionine 1) is an N-acetylmethionine. S-adenosyl-L-methionine contacts are provided by residues tryptophan 139, 165–167 (GSG), tryptophan 228, and alanine 247.

Belongs to the class I-like SAM-binding methyltransferase superfamily. EEF2KMT family. In terms of assembly, interacts with FAM86B2 and FAM86C1P.

It localises to the cytoplasm. It carries out the reaction L-lysyl-[protein] + 3 S-adenosyl-L-methionine = N(6),N(6),N(6)-trimethyl-L-lysyl-[protein] + 3 S-adenosyl-L-homocysteine + 3 H(+). Functionally, catalyzes the trimethylation of eukaryotic elongation factor 2 (EEF2) on 'Lys-525'. In Homo sapiens (Human), this protein is Protein-lysine N-methyltransferase EEF2KMT.